The primary structure comprises 191 residues: MTSVSIHPSVDGGVARGGAEGFQGGTLECHCASDKVTVEVSAQTAHNHACGCSKCWKPDGAKFSVVAVVPRDNVEVTAHQEKLKIVDESATIQRHACTGCGVHLYGRIENKDHAFYGLDFVHTELSKQQGWSAPGFAAFVSSIIETGTPPEQMDEVRARLTELGLPPYDCLSPALMDALSAHVARKKGLLH.

A CENP-V/GFA domain is found at 22–169; sequence FQGGTLECHC…LTELGLPPYD (148 aa). Zn(2+) contacts are provided by Cys-29, Cys-31, Cys-50, Cys-52, Cys-55, Cys-97, and Cys-100.

This sequence belongs to the Gfa family. Zn(2+) is required as a cofactor.

The enzyme catalyses S-(hydroxymethyl)glutathione = glutathione + formaldehyde. It participates in one-carbon metabolism; formaldehyde degradation; formate from formaldehyde (glutathione route): step 1/3. Functionally, catalyzes the condensation of formaldehyde and glutathione to S-hydroxymethylglutathione. This chain is Glutathione-dependent formaldehyde-activating enzyme, found in Xanthomonas axonopodis pv. citri (strain 306).